Consider the following 221-residue polypeptide: Mediator of RNA polymerase II transcription subunit 19a (221 aa).

Residues 101-221 are disordered; the sequence is PVELPPAEKG…DEVGAIRVAG (121 aa). Residues 142 to 152 are compositionally biased toward basic residues; sequence EHKKHKHKHKD. Basic and acidic residues predominate over residues 153 to 178; it reads RSKDKDKDKDRDRKKDKNGHHDSGDH. Residues 179 to 188 are compositionally biased toward basic residues; that stretch reads SKKHHDKKRK.

It belongs to the plant Mediator complex subunit 19 family. As to quaternary structure, component of the Mediator complex. Interacts with FIB2.

It is found in the nucleus. Its function is as follows. Component of the Mediator complex, a coactivator involved in the regulated transcription of nearly all RNA polymerase II-dependent genes. Mediator functions as a bridge to convey information from gene-specific regulatory proteins to the basal RNA polymerase II transcription machinery. The Mediator complex, having a compact conformation in its free form, is recruited to promoters by direct interactions with regulatory proteins and serves for the assembly of a functional preinitiation complex with RNA polymerase II and the general transcription factors. The protein is Mediator of RNA polymerase II transcription subunit 19a (MED19A) of Arabidopsis thaliana (Mouse-ear cress).